We begin with the raw amino-acid sequence, 319 residues long: Pantothenate kinase (319 aa).

96 to 103 (GSVAVGKS) serves as a coordination point for ATP.

Belongs to the prokaryotic pantothenate kinase family.

The protein localises to the cytoplasm. It catalyses the reaction (R)-pantothenate + ATP = (R)-4'-phosphopantothenate + ADP + H(+). Its pathway is cofactor biosynthesis; coenzyme A biosynthesis; CoA from (R)-pantothenate: step 1/5. The chain is Pantothenate kinase (coaA) from Bacillus subtilis (strain 168).